Here is a 207-residue protein sequence, read N- to C-terminus: MTKVALYKQDGTQAGEVELADSIFAIEPNEAVVTDAVLMQRASLRQGTHSVKNRSTVSGGGRKPWRQKGTGNARQGSIRAPQWRGGAISMGPIPRPYAYKINRKAYRLALKSVLSDKVSAKNFVIIDELNFEKPSTKAIADSLNKLEATKKTLLVVDDANENAKLSARNLPNVQVTTASGVNVYDLVKAQKVVIVQSAVKQVEEVLG.

A compositionally biased stretch (polar residues) spans 45–57; that stretch reads RQGTHSVKNRSTV. A disordered region spans residues 45 to 77; that stretch reads RQGTHSVKNRSTVSGGGRKPWRQKGTGNARQGS.

Belongs to the universal ribosomal protein uL4 family. As to quaternary structure, part of the 50S ribosomal subunit.

Its function is as follows. One of the primary rRNA binding proteins, this protein initially binds near the 5'-end of the 23S rRNA. It is important during the early stages of 50S assembly. It makes multiple contacts with different domains of the 23S rRNA in the assembled 50S subunit and ribosome. Functionally, forms part of the polypeptide exit tunnel. This is Large ribosomal subunit protein uL4 from Oenococcus oeni (strain ATCC BAA-331 / PSU-1).